A 352-amino-acid chain; its full sequence is Hematopoietic SH2 domain-containing protein (352 aa).

In terms of domain architecture, SH2 spans 34 to 125; that stretch reads WFHGAISRED…PRRELLTQPC (92 aa). 2 disordered regions span residues 157 to 199 and 241 to 352; these read EEAS…LGET and VISG…PGYC. Residues 180-191 show a composition bias toward polar residues; it reads RITTKEATSSCP. The segment covering 283–295 has biased composition (basic and acidic residues); sequence PKDRKVPTRKAER. Residues 343-352 show a composition bias toward pro residues; it reads QPPPFAPGYC.

In terms of assembly, interacts with FES and TNK2. Post-translationally, may be phosphorylated by FES and ACK1. In terms of tissue distribution, predominantly expressed in spleen and hematopoietic cells such as peripheral blood leukocytes and weakly expressed in prostate, thymus, heart, small intestine and placenta.

It is found in the cytoplasm. The protein localises to the nucleus. In terms of biological role, may be a modulator of the apoptotic response through its ability to affect mitochondrial stability. Adapter protein involved in tyrosine kinase and CD28 signaling. Seems to affect CD28-mediated activation of the RE/AP element of the interleukin-2 promoter. The chain is Hematopoietic SH2 domain-containing protein (HSH2D) from Homo sapiens (Human).